Reading from the N-terminus, the 446-residue chain is Glycine--tRNA ligase (446 aa).

Positions 100 and 158 each coordinate substrate. ATP-binding positions include 190–192 (RNE), 200–205 (FRTREF), 275–276 (EL), and 319–322 (GIER). Position 205–209 (205–209 (FEQFE)) interacts with substrate. Residue 315-319 (EPAVG) coordinates substrate.

This sequence belongs to the class-II aminoacyl-tRNA synthetase family. Homodimer.

The protein resides in the cytoplasm. The catalysed reaction is tRNA(Gly) + glycine + ATP = glycyl-tRNA(Gly) + AMP + diphosphate. Functionally, catalyzes the attachment of glycine to tRNA(Gly). The chain is Glycine--tRNA ligase from Mycoplasma genitalium (strain ATCC 33530 / DSM 19775 / NCTC 10195 / G37) (Mycoplasmoides genitalium).